Consider the following 420-residue polypeptide: Serine hydroxymethyltransferase (420 aa).

Residues L123 and 127 to 129 (GHL) each bind (6S)-5,6,7,8-tetrahydrofolate. K232 bears the N6-(pyridoxal phosphate)lysine mark. 357-359 (SPF) contributes to the (6S)-5,6,7,8-tetrahydrofolate binding site.

The protein belongs to the SHMT family. In terms of assembly, homodimer. Pyridoxal 5'-phosphate serves as cofactor.

Its subcellular location is the cytoplasm. It catalyses the reaction (6R)-5,10-methylene-5,6,7,8-tetrahydrofolate + glycine + H2O = (6S)-5,6,7,8-tetrahydrofolate + L-serine. Its pathway is one-carbon metabolism; tetrahydrofolate interconversion. It functions in the pathway amino-acid biosynthesis; glycine biosynthesis; glycine from L-serine: step 1/1. Catalyzes the reversible interconversion of serine and glycine with tetrahydrofolate (THF) serving as the one-carbon carrier. This reaction serves as the major source of one-carbon groups required for the biosynthesis of purines, thymidylate, methionine, and other important biomolecules. Also exhibits THF-independent aldolase activity toward beta-hydroxyamino acids, producing glycine and aldehydes, via a retro-aldol mechanism. The sequence is that of Serine hydroxymethyltransferase from Streptococcus pyogenes serotype M4 (strain MGAS10750).